The primary structure comprises 720 residues: Polyribonucleotide nucleotidyltransferase (720 aa).

Residues Asp484 and Asp490 each contribute to the Mg(2+) site. Positions 551–610 constitute a KH domain; sequence PRMYKINIDPSKIGSVIGSGGKTIRSIIEQTNTTVDIENDGTVVIGAIDEASAKKAIKII. In terms of domain architecture, S1 motif spans 620-688; it reads GSIYTGKVTR…NQGRVNLSHR (69 aa). The disordered stretch occupies residues 697-720; the sequence is PISRNRDSQPRRPGPFRPSDRSNS.

This sequence belongs to the polyribonucleotide nucleotidyltransferase family. Mg(2+) serves as cofactor.

It localises to the cytoplasm. The enzyme catalyses RNA(n+1) + phosphate = RNA(n) + a ribonucleoside 5'-diphosphate. In terms of biological role, involved in mRNA degradation. Catalyzes the phosphorolysis of single-stranded polyribonucleotides processively in the 3'- to 5'-direction. This Dehalococcoides mccartyi (strain ATCC BAA-2100 / JCM 16839 / KCTC 5957 / BAV1) protein is Polyribonucleotide nucleotidyltransferase.